The sequence spans 169 residues: Peptide deformylase (169 aa).

The Fe cation site is built by cysteine 92 and histidine 134. Glutamate 135 is an active-site residue. Histidine 138 provides a ligand contact to Fe cation.

The protein belongs to the polypeptide deformylase family. Requires Fe(2+) as cofactor.

It catalyses the reaction N-terminal N-formyl-L-methionyl-[peptide] + H2O = N-terminal L-methionyl-[peptide] + formate. In terms of biological role, removes the formyl group from the N-terminal Met of newly synthesized proteins. Requires at least a dipeptide for an efficient rate of reaction. N-terminal L-methionine is a prerequisite for activity but the enzyme has broad specificity at other positions. The chain is Peptide deformylase from Cellvibrio japonicus (strain Ueda107) (Pseudomonas fluorescens subsp. cellulosa).